The sequence spans 585 residues: Arginine--tRNA ligase (585 aa).

The 'HIGH' region motif lies at 131–141 (ANPTGPMHVGH).

The protein belongs to the class-I aminoacyl-tRNA synthetase family. In terms of assembly, monomer.

The protein localises to the cytoplasm. The catalysed reaction is tRNA(Arg) + L-arginine + ATP = L-arginyl-tRNA(Arg) + AMP + diphosphate. This chain is Arginine--tRNA ligase, found in Brucella suis (strain ATCC 23445 / NCTC 10510).